The following is a 935-amino-acid chain: Epstein-Barr nuclear antigen 3 (935 aa).

5 disordered regions span residues 1 to 89, 342 to 373, 399 to 446, 611 to 634, and 883 to 908; these read MDKD…DLPG, HVEG…VSRG, TEQG…VPEP, KQAS…MEGP, and HGRP…DHEP. Residues 10 to 19 are compositionally biased toward acidic residues; the sequence is ALDDNMEEEV. The span at 20-29 shows a compositional bias: polar residues; that stretch reads PSTSVVQEQV. A compositionally biased stretch (acidic residues) spans 352-366; sequence EESEDTESDGDDEDL. The span at 399 to 410 shows a compositional bias: basic and acidic residues; it reads TEQGKEVLEKAR. Positions 431-440 are enriched in polar residues; it reads SDETATSHGS. A compositionally biased stretch (low complexity) spans 615 to 630; it reads VEVQPPQVTQVSPQQP.

Belongs to the herpesviridae EBNA-3 family. Interacts with human UCKL1. Interacts with host CTPB1; this interaction seems important for EBNA3-mediated transcriptional repression. Interacts with host RBPJ. Interacts with host USP12 and WDR48; these interactions form a deubiquitination-competent complex.

It localises to the host nucleus matrix. In terms of biological role, plays an essential role for activation and immortalization of human B-cells. Represses transcription of viral promoters TP1 and Cp through interaction with host RBPJ, and inhibits EBNA2-mediated activation of these promoters. Since Cp is the promoter for all EBNA mRNAs, EBNA3A probably contributes to a negative autoregulatory control loop. This is Epstein-Barr nuclear antigen 3 (EBNA3) from Homo sapiens (Human).